The primary structure comprises 445 residues: 3-dehydroquinate synthase, chloroplastic (445 aa).

A chloroplast-targeting transit peptide spans 1-68 (MAAFSLSAKQ…RASASSTAPV (68 aa)). Residues Asn-122, 153–155 (DGE), Lys-158, 186–191 (GGVIGD), 211–212 (TT), Lys-224, Lys-233, and 251–254 (TLNT) contribute to the NAD(+) site. Glu-266 is an a divalent metal cation binding site. Lys-308 contacts NAD(+). His-329 and His-346 together coordinate a divalent metal cation.

This sequence belongs to the sugar phosphate cyclases superfamily. Dehydroquinate synthase family. As to quaternary structure, homodimer. Requires a divalent metal cation as cofactor. It depends on NAD(+) as a cofactor.

It is found in the plastid. Its subcellular location is the chloroplast. The enzyme catalyses 7-phospho-2-dehydro-3-deoxy-D-arabino-heptonate = 3-dehydroquinate + phosphate. It functions in the pathway metabolic intermediate biosynthesis; chorismate biosynthesis; chorismate from D-erythrose 4-phosphate and phosphoenolpyruvate: step 2/7. In terms of biological role, catalyzes the second step in the shikimate pathway. In Actinidia chinensis var. chinensis (Chinese soft-hair kiwi), this protein is 3-dehydroquinate synthase, chloroplastic (DHQS).